Reading from the N-terminus, the 332-residue chain is Super small secreted glycoprotein (332 aa).

Positions 1–33 (MGSGYQLLQLPRERFRKTSFLVWVIILFQRAIS) are cleaved as a signal peptide. A glycan (N-linked (GlcNAc...) asparagine; by host) is linked at N41. Intrachain disulfides connect C109-C136 and C122-C148. N205, N239, N258, and N269 each carry an N-linked (GlcNAc...) asparagine; by host glycan.

Belongs to the filoviruses glycoprotein family.

The protein localises to the secreted. This chain is Super small secreted glycoprotein (GP), found in Homo sapiens (Human).